The primary structure comprises 296 residues: Phosphoribosylaminoimidazole-succinocarboxamide synthase (296 aa).

This sequence belongs to the SAICAR synthetase family.

The catalysed reaction is 5-amino-1-(5-phospho-D-ribosyl)imidazole-4-carboxylate + L-aspartate + ATP = (2S)-2-[5-amino-1-(5-phospho-beta-D-ribosyl)imidazole-4-carboxamido]succinate + ADP + phosphate + 2 H(+). Its pathway is purine metabolism; IMP biosynthesis via de novo pathway; 5-amino-1-(5-phospho-D-ribosyl)imidazole-4-carboxamide from 5-amino-1-(5-phospho-D-ribosyl)imidazole-4-carboxylate: step 1/2. The chain is Phosphoribosylaminoimidazole-succinocarboxamide synthase from Thioalkalivibrio sulfidiphilus (strain HL-EbGR7).